A 473-amino-acid polypeptide reads, in one-letter code: Glycogen synthase (473 aa).

Lys15 serves as a coordination point for ADP-alpha-D-glucose.

This sequence belongs to the glycosyltransferase 1 family. Bacterial/plant glycogen synthase subfamily.

The enzyme catalyses [(1-&gt;4)-alpha-D-glucosyl](n) + ADP-alpha-D-glucose = [(1-&gt;4)-alpha-D-glucosyl](n+1) + ADP + H(+). Its pathway is glycan biosynthesis; glycogen biosynthesis. Functionally, synthesizes alpha-1,4-glucan chains using ADP-glucose. The sequence is that of Glycogen synthase from Flavobacterium johnsoniae (strain ATCC 17061 / DSM 2064 / JCM 8514 / BCRC 14874 / CCUG 350202 / NBRC 14942 / NCIMB 11054 / UW101) (Cytophaga johnsonae).